A 396-amino-acid chain; its full sequence is Probable sugar efflux transporter (396 aa).

A run of 12 helical transmembrane segments spans residues 15 to 35 (VLIM…PVAM), 51 to 71 (GLMM…AMLA), 84 to 104 (LFII…FWIL), 109 to 129 (MCIA…VMRI), 137 to 157 (QALG…LPIG), 168 to 188 (VTFG…IRLL), 209 to 229 (PLLL…FTAY), 245 to 265 (NFAT…SLLF), 276 to 296 (FIVV…FSTE), 297 to 317 (TIIA…CIGL), 333 to 353 (VATA…ALFG), and 365 to 385 (IGYT…TTHL).

It belongs to the major facilitator superfamily. SotB (TC 2.A.1.2) family.

The protein localises to the cell inner membrane. Involved in the efflux of sugars. The physiological role may be the reduction of the intracellular concentration of toxic sugars or sugar metabolites. This chain is Probable sugar efflux transporter, found in Haemophilus influenzae (strain PittGG).